Here is a 327-residue protein sequence, read N- to C-terminus: Glycerol-3-phosphate dehydrogenase [NAD(P)+] (327 aa).

Residues W11, R30, and K103 each coordinate NADPH. Residues K103, G131, and S133 each coordinate sn-glycerol 3-phosphate. A135 lines the NADPH pocket. Positions 186, 243, 253, 254, and 255 each coordinate sn-glycerol 3-phosphate. The active-site Proton acceptor is K186. R254 serves as a coordination point for NADPH. NADPH is bound by residues V281 and E283.

It belongs to the NAD-dependent glycerol-3-phosphate dehydrogenase family.

The protein resides in the cytoplasm. The catalysed reaction is sn-glycerol 3-phosphate + NAD(+) = dihydroxyacetone phosphate + NADH + H(+). The enzyme catalyses sn-glycerol 3-phosphate + NADP(+) = dihydroxyacetone phosphate + NADPH + H(+). It functions in the pathway membrane lipid metabolism; glycerophospholipid metabolism. In terms of biological role, catalyzes the reduction of the glycolytic intermediate dihydroxyacetone phosphate (DHAP) to sn-glycerol 3-phosphate (G3P), the key precursor for phospholipid synthesis. This Wolbachia sp. subsp. Drosophila simulans (strain wRi) protein is Glycerol-3-phosphate dehydrogenase [NAD(P)+].